We begin with the raw amino-acid sequence, 1050 residues long: Diacylglycerol kinase iota (1050 aa).

Disordered regions lie at residues 52 to 73 and 325 to 356; these read NPSSSAGEERGATGGSSSSGSG and PQNSLKASNRKKKRTSFKRKASKRGTEQENKG. Basic residues predominate over residues 332 to 347; that stretch reads SNRKKKRTSFKRKASK. The DAGKc domain occupies 367–502; sequence PLMKPLLVFV…DRWNLHVERN (136 aa). ANK repeat units lie at residues 943-972 and 979-1008; these read GHCSLLHYAAKTGNGEIVKYILDHGPAELL and TGETALHKAACQRNRAVCQLLVDAGASLRQ. The PDZ-binding signature appears at 1048–1050; that stretch reads TAV.

The protein belongs to the eukaryotic diacylglycerol kinase family. In terms of assembly, interacts (via PDZ-binding motif) with DLG4; controls the localization of DGKI to the synapse. Interacts (via PDZ-binding motif) with DLG1. Interacts (via PDZ-binding motif) with DLG2. Interacts (via PDZ-binding motif) with DLG3. May interact with RASGRP3; involved in the regulation of RASGRP3 activity. Specifically expressed in brain (at protein level). Expressed in hippocampus, cerebellum, brain stem and spinal cord (at protein level). Highly expressed in hippocampus, cerebellar cortex, olfactory bulb, and olfactory tubercle and to lower extent in the cerebral cortex, caudate putamen, and thalamus. Not detected in the white matter. Also expressed in eye. As to expression, major isoform in brain (at protein level). In terms of tissue distribution, minor isoform in brain (at protein level). Expressed in brain (at protein level).

It localises to the cell projection. Its subcellular location is the axon. It is found in the dendrite. The protein localises to the presynapse. The protein resides in the postsynapse. It localises to the postsynaptic density. Its subcellular location is the synaptic cell membrane. It is found in the cytoplasmic vesicle. The protein localises to the secretory vesicle. The protein resides in the synaptic vesicle membrane. It localises to the cytoplasm. Its subcellular location is the cytosol. It is found in the nucleus. It catalyses the reaction a 1,2-diacyl-sn-glycerol + ATP = a 1,2-diacyl-sn-glycero-3-phosphate + ADP + H(+). The catalysed reaction is 1,2-di-(9Z-octadecenoyl)-sn-glycerol + ATP = 1,2-di-(9Z-octadecenoyl)-sn-glycero-3-phosphate + ADP + H(+). The enzyme catalyses 1-octadecanoyl-2-(9Z,12Z)-octadecadienoyl-sn-glycerol + ATP = 1-octadecanoyl-2-(9Z,12Z-octadecadienoyl)-sn-glycero-3-phosphate + ADP + H(+). It carries out the reaction 1-octadecanoyl-2-(5Z,8Z,11Z,14Z-eicosatetraenoyl)-sn-glycerol + ATP = 1-octadecanoyl-2-(5Z,8Z,11Z,14Z-eicosatetraenoyl)-sn-glycero-3-phosphate + ADP + H(+). The protein operates within lipid metabolism; glycerolipid metabolism. Its activity is regulated as follows. Activated by phosphatidylserine. Its function is as follows. Diacylglycerol kinase that converts diacylglycerol/DAG into phosphatidic acid/phosphatidate/PA and regulates the respective levels of these two bioactive lipids. Thereby, acts as a central switch between the signaling pathways activated by these second messengers with different cellular targets and opposite effects in numerous biological processes. Has probably no preference for any of the diacylglycerols in terms of the acyl chain composition, especially for the acyl chain at the sn-2 position. By controlling the diacylglycerol/DAG-mediated activation of RASGRP3, negatively regulates the Rap1 signaling pathway. May play a role in presynaptic diacylglycerol/DAG signaling and control neurotransmitter release during metabotropic glutamate receptor-dependent long-term depression. Has a decreased affinity for ATP and a reduced diacylglycerol kinase activity. Has no preference for any of the diacylglycerols in terms of the acyl chain composition. In terms of biological role, has no diacylglycerol kinase activity. The sequence is that of Diacylglycerol kinase iota from Rattus norvegicus (Rat).